The following is a 1040-amino-acid chain: Isoleucine--tRNA ligase (1040 aa).

A 'HIGH' region motif is present at residues 47–57 (PYCSGSIHLGT). Positions 605-609 (KMSKS) match the 'KMSKS' region motif. Position 608 (K608) interacts with ATP.

Belongs to the class-I aminoacyl-tRNA synthetase family. IleS type 2 subfamily. As to quaternary structure, monomer. The cofactor is Zn(2+).

It is found in the cytoplasm. It catalyses the reaction tRNA(Ile) + L-isoleucine + ATP = L-isoleucyl-tRNA(Ile) + AMP + diphosphate. Catalyzes the attachment of isoleucine to tRNA(Ile). As IleRS can inadvertently accommodate and process structurally similar amino acids such as valine, to avoid such errors it has two additional distinct tRNA(Ile)-dependent editing activities. One activity is designated as 'pretransfer' editing and involves the hydrolysis of activated Val-AMP. The other activity is designated 'posttransfer' editing and involves deacylation of mischarged Val-tRNA(Ile). In Methanococcus aeolicus (strain ATCC BAA-1280 / DSM 17508 / OCM 812 / Nankai-3), this protein is Isoleucine--tRNA ligase.